The sequence spans 822 residues: uncharacterized protein (822 aa).

The segment at 1–230 is disordered; it reads MARGKRSTQR…NAAPLNKTDA (230 aa). Serine 27 carries the phosphoserine modification. Residues 34–44 show a composition bias toward basic residues; it reads SKAKKNKKKLN. A phosphoserine mark is found at serine 47, serine 51, and serine 55. Tyrosine 57 bears the Phosphotyrosine mark. Residues 61–70 show a composition bias toward acidic residues; that stretch reads PEDDEVDEEV. Residues 73-85 show a composition bias toward basic residues; that stretch reads VKKKPSKKSKKAK. Residues 92-106 are compositionally biased toward acidic residues; sequence FADEQSVEEEEEEDS. Serine 97 is subject to Phosphoserine. Positions 111–121 are enriched in basic residues; it reads RKNKKSSKKAS. 2 stretches are compositionally biased toward acidic residues: residues 129-144 and 163-172; these read LADD…EESE and SEALDDGDIE. A phosphoserine mark is found at serine 137 and serine 163. 2 consecutive ABC transporter domains span residues 276–519 and 594–809; these read LQVE…VQLA and IKFQ…AKER. ATP is bound by residues 308–315 and 627–634; these read APNGSGKS and GPNGAGKT.

This sequence belongs to the ABC transporter superfamily.

Its subcellular location is the cytoplasm. This is an uncharacterized protein from Schizosaccharomyces pombe (strain 972 / ATCC 24843) (Fission yeast).